A 173-amino-acid chain; its full sequence is Small ribosomal subunit protein uS5 (173 aa).

The region spanning 17 to 80 (WQERVIQIRR…ADGKKQLIDV (64 aa)) is the S5 DRBM domain.

This sequence belongs to the universal ribosomal protein uS5 family. As to quaternary structure, part of the 30S ribosomal subunit. Contacts proteins S4 and S8.

Functionally, with S4 and S12 plays an important role in translational accuracy. In terms of biological role, located at the back of the 30S subunit body where it stabilizes the conformation of the head with respect to the body. The chain is Small ribosomal subunit protein uS5 from Crocosphaera subtropica (strain ATCC 51142 / BH68) (Cyanothece sp. (strain ATCC 51142)).